A 99-amino-acid chain; its full sequence is MEIKITEVKENKLIGRKEIYFEIYHPGEPTPSRKDVKGKLVAMLDLNPETTVIQYIRSYFGSYKSKGYAKYYYDKERMLYIEPEYILIRDGIIEKKEGE.

The protein belongs to the eukaryotic ribosomal protein eS24 family.

The polypeptide is Small ribosomal subunit protein eS24 (Pyrococcus horikoshii (strain ATCC 700860 / DSM 12428 / JCM 9974 / NBRC 100139 / OT-3)).